The chain runs to 371 residues: MAQIDFSAEIRALRATYSSIENVSNVEELKEDIAELSERAGEPNLWDDPAAAQKITSRLSHRQSELERLNTLVSRIDDLEVLVELGQDEDDADSMGEAAAELESIRKSLKDLEVVTLLSGEFDEREAVVTIRAGAGGVDAADFAEMLLRMYLRWAERHGYPTTIMDTSYAEEAGLKSATFEVNAPYAYGTLSVEAGTHRLVRISPFDNQGRRQTSFAAVEVIPLIEQTDSIDIPDNEIRVDVFRSSGPGGQSVNTTDSAVRLTHIPTGTVVSMQNEKSQLQNRAAALRVLQSRLLLLKKEQEDAEKKAFAGDVKASWGDQMRSYVLNPYQMVKDLRTEHEVGNTSAVFDGEIDDFIDAGIRWRTDNRNAAN.

The residue at position 251 (glutamine 251) is an N5-methylglutamine.

This sequence belongs to the prokaryotic/mitochondrial release factor family. Methylated by PrmC. Methylation increases the termination efficiency of RF2.

It localises to the cytoplasm. In terms of biological role, peptide chain release factor 2 directs the termination of translation in response to the peptide chain termination codons UGA and UAA. The sequence is that of Peptide chain release factor 2 from Arthrobacter sp. (strain FB24).